A 349-amino-acid polypeptide reads, in one-letter code: Protein disulfide isomerase Creld2 (349 aa).

Positions 1–22 (MHLLLAAGFGLLLLLLPPPAAS) are cleaved as a signal peptide. Residues 28–31 (CQRC) carry the CXXC motif. 4 cysteine pairs are disulfide-bonded: cysteine 28-cysteine 31, cysteine 137-cysteine 151, cysteine 145-cysteine 163, and cysteine 165-cysteine 174. In terms of domain architecture, EGF-like 1 spans 133 to 175 (DCKECQGGSERPCSGNGYCSGDGSRQGDGSCQCHAGYKGPLCI). Residue asparagine 187 is glycosylated (N-linked (GlcNAc...) asparagine). The stretch at 190-237 (HSICLACDESCKTCSGPSNKDCVQCEVGWARVEDACVDVDECAAETPP) is one FU 1 repeat. N-linked (GlcNAc...) asparagine glycosylation occurs at asparagine 248. An FU 2 repeat occupies 250–297 (SYICEECDSTCVGCTGKGPANCKECIAGYTKQSGQCADIDECSLEEKA). The CXXC signature appears at 260–263 (CVGC). 4 disulfide bridges follow: cysteine 260/cysteine 263, cysteine 291/cysteine 305, cysteine 298/cysteine 314, and cysteine 316/cysteine 327. Positions 287–328 (DIDECSLEEKACKRRNENCYNVPGSFVCVCPDGFEETEDACV) constitute an EGF-like 2; calcium-binding domain.

The protein belongs to the CRELD family. In terms of assembly, interacts with Chrna4. Component of a complex containing at least Creld2, Manf, Matn3 and Pdia4. As to expression, broadly expressed in brain (at protein level).

It is found in the endoplasmic reticulum. It carries out the reaction Catalyzes the rearrangement of -S-S- bonds in proteins.. Its function is as follows. Protein disulfide isomerase. Might play a role in the unfolded protein response. May regulate transport of alpha4-beta2 neuronal acetylcholine receptor. In Rattus norvegicus (Rat), this protein is Protein disulfide isomerase Creld2 (Creld2).